We begin with the raw amino-acid sequence, 299 residues long: Protoheme IX farnesyltransferase (299 aa).

9 helical membrane-spanning segments follow: residues 27-47 (VVAL…HEHF), 53-73 (LIAL…NHLI), 97-117 (FNVL…LMLW), 121-141 (LTAY…TLYL), 149-169 (IVIA…SITG), 175-195 (AWLL…ALAI), 222-242 (ILLY…VGMA), 244-264 (YLYL…AIKL), and 273-293 (AIEM…ALLL).

It belongs to the UbiA prenyltransferase family. Protoheme IX farnesyltransferase subfamily.

The protein localises to the cell inner membrane. The enzyme catalyses heme b + (2E,6E)-farnesyl diphosphate + H2O = Fe(II)-heme o + diphosphate. It functions in the pathway porphyrin-containing compound metabolism; heme O biosynthesis; heme O from protoheme: step 1/1. Functionally, converts heme B (protoheme IX) to heme O by substitution of the vinyl group on carbon 2 of heme B porphyrin ring with a hydroxyethyl farnesyl side group. In Vibrio vulnificus (strain YJ016), this protein is Protoheme IX farnesyltransferase.